The primary structure comprises 431 residues: Histidine--tRNA ligase (431 aa).

A disordered region spans residues 1–20 (MALQRPKGTQDHLPDGSPKL).

The protein belongs to the class-II aminoacyl-tRNA synthetase family. Homodimer.

The protein localises to the cytoplasm. The catalysed reaction is tRNA(His) + L-histidine + ATP = L-histidyl-tRNA(His) + AMP + diphosphate + H(+). The chain is Histidine--tRNA ligase from Deinococcus geothermalis (strain DSM 11300 / CIP 105573 / AG-3a).